Here is a 370-residue protein sequence, read N- to C-terminus: Coproporphyrin III ferrochelatase (370 aa).

Residues Ser58 and Tyr127 each contribute to the Fe-coproporphyrin III site. The Fe(2+) site is built by His189 and Glu276.

It belongs to the ferrochelatase family.

Its subcellular location is the cytoplasm. It catalyses the reaction Fe-coproporphyrin III + 2 H(+) = coproporphyrin III + Fe(2+). It participates in porphyrin-containing compound metabolism; protoheme biosynthesis. Its function is as follows. Involved in coproporphyrin-dependent heme b biosynthesis. Catalyzes the insertion of ferrous iron into coproporphyrin III to form Fe-coproporphyrin III. This chain is Coproporphyrin III ferrochelatase, found in Corynebacterium glutamicum (strain ATCC 13032 / DSM 20300 / JCM 1318 / BCRC 11384 / CCUG 27702 / LMG 3730 / NBRC 12168 / NCIMB 10025 / NRRL B-2784 / 534).